Reading from the N-terminus, the 523-residue chain is GMP synthase [glutamine-hydrolyzing] (523 aa).

A Glutamine amidotransferase type-1 domain is found at 18-208; it reads KILIVDFGGQ…LYNVCGAKGD (191 aa). The Nucleophile role is filled by Cys95. Catalysis depends on residues His182 and Glu184. The GMPS ATP-PPase domain maps to 209–398; that stretch reads WNMKSFLAEA…LGLPDYLVHR (190 aa). 236-242 is an ATP binding site; that stretch reads SGGVDSS.

Homodimer.

It carries out the reaction XMP + L-glutamine + ATP + H2O = GMP + L-glutamate + AMP + diphosphate + 2 H(+). The protein operates within purine metabolism; GMP biosynthesis; GMP from XMP (L-Gln route): step 1/1. Catalyzes the synthesis of GMP from XMP. This Treponema denticola (strain ATCC 35405 / DSM 14222 / CIP 103919 / JCM 8153 / KCTC 15104) protein is GMP synthase [glutamine-hydrolyzing].